Here is a 233-residue protein sequence, read N- to C-terminus: MGQKVHPNGIRLGIVKPWNATWFANTKDFADNLDGDFKVRQFLTKELSKASLSRIVIERPAKSIRVTIHTARPGVVIGKKGEDVEKLRTAVAKIAGVPAQINIAEVRKPELDAQLVGDSIASQLERRVMFRRAMKRAVQNAMRLGAKGIKVEVSGRLGGAEIARSEWYREGRVPLHTLRADIDYATSSAHTTYGVIGIKVWIFKGEILGGMPAATEAAEPKADKPKKQRKGRK.

Residues V39–R107 form the KH type-2 domain.

Belongs to the universal ribosomal protein uS3 family. Part of the 30S ribosomal subunit. Forms a tight complex with proteins S10 and S14.

In terms of biological role, binds the lower part of the 30S subunit head. Binds mRNA in the 70S ribosome, positioning it for translation. The protein is Small ribosomal subunit protein uS3 of Vibrio vulnificus (strain CMCP6).